The following is a 279-amino-acid chain: Urease accessory protein UreD (279 aa).

It belongs to the UreD family. In terms of assembly, ureD, UreF and UreG form a complex that acts as a GTP-hydrolysis-dependent molecular chaperone, activating the urease apoprotein by helping to assemble the nickel containing metallocenter of UreC. The UreE protein probably delivers the nickel.

The protein resides in the cytoplasm. Its function is as follows. Required for maturation of urease via the functional incorporation of the urease nickel metallocenter. The chain is Urease accessory protein UreD from Pseudomonas fluorescens (strain ATCC BAA-477 / NRRL B-23932 / Pf-5).